The chain runs to 139 residues: Holo-[acyl-carrier-protein] synthase (139 aa).

2 residues coordinate Mg(2+): Asp-8 and Glu-61.

This sequence belongs to the P-Pant transferase superfamily. AcpS family. Mg(2+) is required as a cofactor.

The protein localises to the cytoplasm. The catalysed reaction is apo-[ACP] + CoA = holo-[ACP] + adenosine 3',5'-bisphosphate + H(+). Its function is as follows. Transfers the 4'-phosphopantetheine moiety from coenzyme A to a Ser of acyl-carrier-protein. This chain is Holo-[acyl-carrier-protein] synthase, found in Bradyrhizobium sp. (strain BTAi1 / ATCC BAA-1182).